A 317-amino-acid polypeptide reads, in one-letter code: Melanocyte-stimulating hormone receptor (317 aa).

Residues 1-37 (MVWQGPQRRLLGSLNGTSPATPHFELAANQTGPRCLE) lie on the Extracellular side of the membrane. 2 N-linked (GlcNAc...) asparagine glycosylation sites follow: asparagine 15 and asparagine 29. The helical transmembrane segment at 38–63 (VSIPNGLFLSLGLVSVVENVLVVAAI) threads the bilayer. Residues 64–72 (AKNRNLHSP) lie on the Cytoplasmic side of the membrane. The chain crosses the membrane as a helical span at residues 73 to 93 (MYYFIGCLAVSDLLVSVTNVL). Residues 94–118 (ETAVMLLVEAGALAAQAAVVQQLDD) lie on the Extracellular side of the membrane. The chain crosses the membrane as a helical span at residues 119–140 (IIDVLICGSMVSSLCFLGAIAV). Residues 141 to 163 (DRYLSIFYALRYHSIVTLPRAWR) are Cytoplasmic-facing. A helical transmembrane segment spans residues 164–183 (AISAIWVASVLSSTLFIAYY). Topologically, residues 184–191 (NHTAVLLC) are extracellular. The helical transmembrane segment at 192–211 (LVSFFVAMLVLMAVLYVHML) threads the bilayer. Over 212-240 (ARARQHARGIARLRKRQHSVHQGFGLKGA) the chain is Cytoplasmic. Residues 241–266 (ATLTILLGIFFLCWGPFFLHLSLMVL) traverse the membrane as a helical segment. The Extracellular segment spans residues 267 to 279 (CPQHPICGCVFQN). A helical membrane pass occupies residues 280-300 (FNLFLTLIICNSIIDPFIYAF). The Cytoplasmic segment spans residues 301 to 317 (RSQELRKTLQEVVLCSW). A lipid anchor (S-palmitoyl cysteine) is attached at cysteine 315.

Belongs to the G-protein coupled receptor 1 family. Interacts with MGRN1, but does not undergo MGRN1-mediated ubiquitination; this interaction competes with GNAS-binding and thus inhibits agonist-induced cAMP production. Interacts with OPN3; the interaction results in a decrease in MC1R-mediated cAMP signaling and ultimately a decrease in melanin production in melanocytes.

It localises to the cell membrane. Receptor for MSH (alpha, beta and gamma) and ACTH. The activity of this receptor is mediated by G proteins which activate adenylate cyclase. Mediates melanogenesis, the production of eumelanin (black/brown) and phaeomelanin (red/yellow), via regulation of cAMP signaling in melanocytes. The polypeptide is Melanocyte-stimulating hormone receptor (MC1R) (Canis lupus familiaris (Dog)).